The sequence spans 148 residues: Snaclec 7 (148 aa).

The first 23 residues, 1 to 23 (MGRFIFVSFGLLVVFLSLSGTGA), serve as a signal peptide directing secretion. 3 cysteine pairs are disulfide-bonded: cysteine 27–cysteine 38, cysteine 55–cysteine 144, and cysteine 121–cysteine 136. The region spanning 34–145 (HERHCYKVIN…CSSTHPFVCK (112 aa)) is the C-type lectin domain.

The protein belongs to the snaclec family. In terms of assembly, heterodimer; disulfide-linked. In terms of tissue distribution, expressed by the venom gland.

Its subcellular location is the secreted. In terms of biological role, interferes with one step of hemostasis (modulation of platelet aggregation, or coagulation cascade, for example). This Echis pyramidum leakeyi (Leakey's carpet viper) protein is Snaclec 7.